Consider the following 73-residue polypeptide: Neurogranin (73 aa).

Positions 26 to 55 (ANAAAAKIQASFRGHMTRKKIKGGEIDRKT) constitute an IQ domain. The residue at position 36 (Ser-36) is a Phosphoserine; by PKC. Positions 47 to 59 (KGGEIDRKTKDAE) are enriched in basic and acidic residues. The tract at residues 47–73 (KGGEIDRKTKDAECANSTRGGDLRNGD) is disordered.

The protein belongs to the neurogranin family.

Its function is as follows. Acts as a 'third messenger' substrate of protein kinase C-mediated molecular cascades during synaptic development and remodeling. Binds to calmodulin in the absence of calcium. This Serinus canaria (Island canary) protein is Neurogranin (NRGN).